We begin with the raw amino-acid sequence, 162 residues long: Phosphopantetheine adenylyltransferase (162 aa).

T9 contacts substrate. Residues 9–10 and H17 each bind ATP; that span reads TF. Substrate contacts are provided by K41, L73, and R87. Residues 88–90, E98, and 123–129 contribute to the ATP site; these read GLR and FAFLSST.

Belongs to the bacterial CoaD family. As to quaternary structure, homohexamer. Mg(2+) serves as cofactor.

It is found in the cytoplasm. It carries out the reaction (R)-4'-phosphopantetheine + ATP + H(+) = 3'-dephospho-CoA + diphosphate. It functions in the pathway cofactor biosynthesis; coenzyme A biosynthesis; CoA from (R)-pantothenate: step 4/5. Its function is as follows. Reversibly transfers an adenylyl group from ATP to 4'-phosphopantetheine, yielding dephospho-CoA (dPCoA) and pyrophosphate. This chain is Phosphopantetheine adenylyltransferase, found in Vibrio atlanticus (strain LGP32) (Vibrio splendidus (strain Mel32)).